A 637-amino-acid polypeptide reads, in one-letter code: Early transcription factor 70 kDa subunit (637 aa).

Residues 32 to 185 form the Helicase ATP-binding domain; sequence RTIIDENRSV…GHIIDLMSEE (154 aa). 45–52 is a binding site for ATP; that stretch reads HIMGSGKT. A DEXH box motif is present at residues 135 to 138; that stretch reads DKAH. The 181-residue stretch at 327-507 folds into the Helicase C-terminal domain; sequence KFKYFINRIQ…VLPFDIKKLL (181 aa).

This sequence belongs to the helicase family. VETF subfamily. As to quaternary structure, heterodimer of a 70 kDa and a 82 kDa subunit. Part of the early transcription complex composed of ETF, RAP94/OPG109, and the DNA-directed RNA polymerase.

The protein resides in the virion. Its function is as follows. Acts with RNA polymerase to initiate transcription from early gene promoters. Is recruited by the RPO-associated protein of 94 kDa RAP94/OPG109 to form the early transcription complex, which also contains the core RNA polymerase. ETF heterodimer binds to early gene promoters. The chain is Early transcription factor 70 kDa subunit (OPG118) from Homo sapiens (Human).